Reading from the N-terminus, the 468-residue chain is Trehalose-2-sulfate acyltransferase PapA2 (468 aa).

The protein belongs to the PapA acyltransferase family.

The catalysed reaction is 2-O-sulfo-alpha,alpha-trehalose + hexadecanoyl-CoA = 2-O-sulfo-2'-O-hexadecanoyl-alpha,alpha-trehalose + CoA. Its function is as follows. Required for the biosynthesis of sulfolipid-1 (SL-1), a major mycobacterial cell wall lipid. Catalyzes the acylation of trehalose-2-sulfate by adding the palmitoyl group at the 2'-position to yield the intermediate trehalose-2-sulfate-2'-palmitate (SL659). This chain is Trehalose-2-sulfate acyltransferase PapA2 (papA2), found in Mycobacterium bovis (strain ATCC BAA-935 / AF2122/97).